Here is a 276-residue protein sequence, read N- to C-terminus: METLELQGAKLRYHQVGQGPVLIFIPGANGTGDIFLPLAEQLKDHFTVVAVDRRDYGESELAEPLPDSASNPDSDYRVKRDAQDIAELAKSLSDEPVYILGSSSGSIVAMHVLKDYPEVVKKIAFHEPPINTFLPDSTYWKDKNDDIVHQILTEGLEKGMKTFGETLNIAPIDAKMMSQPADTEEGRIEQYKRTMFWSKFEIRQYTHSDITLDDFTKYSDKITLLNGTDSRGSFPQDVNFYINKETGIPIVDIPGGHLGYIQKPEGFADVLLNMWG.

An AB hydrolase-1 domain is found at 20–137 (PVLIFIPGAN…PPINTFLPDS (118 aa)).

This sequence belongs to the AB hydrolase superfamily.

This is an uncharacterized protein from Staphylococcus aureus (strain MRSA252).